The primary structure comprises 343 residues: tRNA N6-adenosine threonylcarbamoyltransferase (343 aa).

Fe cation is bound by residues His-120 and His-124. Residues 142–146, Asp-175, Gly-188, Asp-192, and Asn-281 contribute to the substrate site; that span reads VVSGG. Asp-310 contacts Fe cation.

It belongs to the KAE1 / TsaD family. Fe(2+) serves as cofactor.

The protein resides in the cytoplasm. It catalyses the reaction L-threonylcarbamoyladenylate + adenosine(37) in tRNA = N(6)-L-threonylcarbamoyladenosine(37) in tRNA + AMP + H(+). Functionally, required for the formation of a threonylcarbamoyl group on adenosine at position 37 (t(6)A37) in tRNAs that read codons beginning with adenine. Is involved in the transfer of the threonylcarbamoyl moiety of threonylcarbamoyl-AMP (TC-AMP) to the N6 group of A37, together with TsaE and TsaB. TsaD likely plays a direct catalytic role in this reaction. The sequence is that of tRNA N6-adenosine threonylcarbamoyltransferase from Bacillus thuringiensis (strain Al Hakam).